The sequence spans 55 residues: Large ribosomal subunit protein bL33 (55 aa).

The protein belongs to the bacterial ribosomal protein bL33 family.

The protein is Large ribosomal subunit protein bL33 of Azoarcus sp. (strain BH72).